We begin with the raw amino-acid sequence, 270 residues long: Phosphatidylglycerol--prolipoprotein diacylglyceryl transferase (270 aa).

Helical transmembrane passes span 19-39 (FPVYWYGIIIGTGVLLGLWLA), 56-76 (LVLIAVPIAILFARMYYVIFE), 92-112 (QGGLAIHGGLIGAVITGILFA), and 116-136 (GVSFWKLADIAAPSILLGQAI). Residue arginine 138 coordinates a 1,2-diacyl-sn-glycero-3-phospho-(1'-sn-glycerol). 3 consecutive transmembrane segments (helical) span residues 178–198 (HPTFLYESLWNFAGVILLLAL), 206–226 (GELFFTYLIWYSIGRFFVEGL), and 236–256 (LRIAQVMSIGLVVISIIFIIV).

It belongs to the Lgt family.

The protein resides in the cell membrane. It carries out the reaction L-cysteinyl-[prolipoprotein] + a 1,2-diacyl-sn-glycero-3-phospho-(1'-sn-glycerol) = an S-1,2-diacyl-sn-glyceryl-L-cysteinyl-[prolipoprotein] + sn-glycerol 1-phosphate + H(+). It participates in protein modification; lipoprotein biosynthesis (diacylglyceryl transfer). Functionally, catalyzes the transfer of the diacylglyceryl group from phosphatidylglycerol to the sulfhydryl group of the N-terminal cysteine of a prolipoprotein, the first step in the formation of mature lipoproteins. The polypeptide is Phosphatidylglycerol--prolipoprotein diacylglyceryl transferase (Bacillus cereus (strain ZK / E33L)).